We begin with the raw amino-acid sequence, 258 residues long: uncharacterized protein (258 aa).

The segment covering 40–54 (AQKTDTPLDSSSYAV) has biased composition (polar residues). Positions 40-63 (AQKTDTPLDSSSYAVTSPEEAPNE) are disordered.

This is an uncharacterized protein from Treponema pallidum (strain Nichols).